The sequence spans 144 residues: 3-hydroxyacyl-[acyl-carrier-protein] dehydratase FabZ (144 aa).

H47 is an active-site residue.

It belongs to the thioester dehydratase family. FabZ subfamily.

Its subcellular location is the cytoplasm. The enzyme catalyses a (3R)-hydroxyacyl-[ACP] = a (2E)-enoyl-[ACP] + H2O. In terms of biological role, involved in unsaturated fatty acids biosynthesis. Catalyzes the dehydration of short chain beta-hydroxyacyl-ACPs and long chain saturated and unsaturated beta-hydroxyacyl-ACPs. This is 3-hydroxyacyl-[acyl-carrier-protein] dehydratase FabZ from Dechloromonas aromatica (strain RCB).